The sequence spans 260 residues: Coiled-coil domain-containing protein 127 (260 aa).

Residues 49–135 (QKEVEKEREA…QVMQEKRQVQ (87 aa)) are a coiled coil.

In Homo sapiens (Human), this protein is Coiled-coil domain-containing protein 127 (CCDC127).